The chain runs to 246 residues: Probable transcriptional regulatory protein CKO_01097 (246 aa).

Residues 1-20 (MAGHSKWANTRHRKAAQDAK) are disordered.

This sequence belongs to the TACO1 family.

The protein localises to the cytoplasm. The sequence is that of Probable transcriptional regulatory protein CKO_01097 from Citrobacter koseri (strain ATCC BAA-895 / CDC 4225-83 / SGSC4696).